The sequence spans 729 residues: Disintegrin and metalloproteinase domain-containing protein 21 (729 aa).

Positions 1–39 (MECFIMLGADARTLMRVTLLLLWLKALPSLIDLSQTGST) are cleaved as a signal peptide. Positions 40–209 (QYLSSPEVVI…MKQNYGKLWP (170 aa)) are excised as a propeptide. Asn-169 carries an N-linked (GlcNAc...) asparagine glycan. The short motif at 176-183 (MLCSLTEK) is the Cysteine switch element. Cys-178 is a binding site for Zn(2+). Topologically, residues 210–685 (HMWFLELAVV…DSGPTSQKRR (476 aa)) are extracellular. The region spanning 212 to 402 (WFLELAVVVD…NQGTCLYNHP (191 aa)) is the Peptidase M12B domain. Asn-231 is a glycosylation site (N-linked (GlcNAc...) asparagine). 3 disulfides stabilise this stretch: Cys-320-Cys-397, Cys-360-Cys-382, and Cys-362-Cys-367. His-345 contributes to the Zn(2+) binding site. Residue Glu-346 is part of the active site. Residues His-349 and His-355 each coordinate Zn(2+). Asn-381, Asn-441, and Asn-482 each carry an N-linked (GlcNAc...) asparagine glycan. A Disintegrin domain is found at 410-496 (VKRCGNGMVE…QCPEDGYVQD (87 aa)). 4 disulfides stabilise this stretch: Cys-468–Cys-488, Cys-638–Cys-649, Cys-643–Cys-655, and Cys-657–Cys-666. In terms of domain architecture, EGF-like spans 638–667 (CLPETCNRKGVCNNKHHCHCDYGWSPPFCL). A helical membrane pass occupies residues 686–706 (VIITVLSITVPVLSILICLLI). Residues 707–729 (AGLYRIYCKIPSGPKETKASSPG) lie on the Cytoplasmic side of the membrane.

Zn(2+) is required as a cofactor. In terms of processing, has no obvious cleavage site for furin endopeptidase, suggesting that the proteolytic processing is regulated. Highly expressed in Leydig cells. Expressed also in cauda epididymidis, vas deferens, convoluted tubules, kidney and the parietal cells of stomach. Not detected on developing spermatocytes or mature sperm.

The protein localises to the membrane. Its function is as follows. May be involved in sperm maturation and/or fertilization. May also be involved in epithelia functions associated with establishing and maintaining gradients of ions or nutrients. The polypeptide is Disintegrin and metalloproteinase domain-containing protein 21 (Adam21) (Mus musculus (Mouse)).